Consider the following 84-residue polypeptide: uncharacterized protein (84 aa).

It to M.jannaschii MJ1121.

This is an uncharacterized protein from Archaeoglobus fulgidus (strain ATCC 49558 / DSM 4304 / JCM 9628 / NBRC 100126 / VC-16).